A 434-amino-acid chain; its full sequence is MQVSVETTEGLGRRLTISVPAEQIEKMVKDGITREAKRARLPGFRPGKVPLSEINKRYGQAIRQDVMGEVMQRNFIEAIIAEKLNPAGAPTFMPGKSVGESFEFVATFEIYPEITLTGLDTIAVEQPKAEVNDADLDAMIETLRKQHATFAVVERASAAGDKVKMNFVGSIDGEEFDGGKADDFELEIGSNRMIPGFETGVTGHKAGETFDIEVSFPEDYHAENLKGKAAKFAITLTEVQAAQLPEVNDEFATLFGITSGGVDALKAEIRKNMTRELEQALKANVKEQVINGLLAANDVTIPSALIDGEVEVLRKQAMQRFGGQTKNMPELPAELFTEQAERRVKIGLLLGEVIKTSELKAEDSRVQALIASMASAYEDPAEVVAYYNSNKEMMQNMRNVALEEQAVEALLKSAKVTTKEVAFEEFMNKASGRA.

Residues 160-245 enclose the PPIase FKBP-type domain; it reads GDKVKMNFVG…LTEVQAAQLP (86 aa).

This sequence belongs to the FKBP-type PPIase family. Tig subfamily.

The protein resides in the cytoplasm. It carries out the reaction [protein]-peptidylproline (omega=180) = [protein]-peptidylproline (omega=0). Functionally, involved in protein export. Acts as a chaperone by maintaining the newly synthesized protein in an open conformation. Functions as a peptidyl-prolyl cis-trans isomerase. The chain is Trigger factor from Shewanella denitrificans (strain OS217 / ATCC BAA-1090 / DSM 15013).